Here is a 546-residue protein sequence, read N- to C-terminus: CTP synthase (546 aa).

Residues 1-266 (MTTRYIFVTG…DDLVVKRFGL (266 aa)) form an amidoligase domain region. Position 14 (Ser-14) interacts with CTP. A UTP-binding site is contributed by Ser-14. ATP-binding positions include 15–20 (SLGKGI) and Asp-72. 2 residues coordinate Mg(2+): Asp-72 and Glu-140. CTP contacts are provided by residues 147-149 (DIE), 187-192 (KTKPTQ), and Lys-223. UTP is bound by residues 187-192 (KTKPTQ) and Lys-223. 239–241 (KDV) provides a ligand contact to ATP. In terms of domain architecture, Glutamine amidotransferase type-1 spans 291 to 542 (VIGMVGKYIE…VAAASAHQKR (252 aa)). L-glutamine is bound at residue Gly-352. The active-site Nucleophile; for glutamine hydrolysis is Cys-379. L-glutamine contacts are provided by residues 380–383 (LGMQ), Glu-403, and Arg-470. Catalysis depends on residues His-515 and Glu-517.

It belongs to the CTP synthase family. Homotetramer.

The enzyme catalyses UTP + L-glutamine + ATP + H2O = CTP + L-glutamate + ADP + phosphate + 2 H(+). The catalysed reaction is L-glutamine + H2O = L-glutamate + NH4(+). It catalyses the reaction UTP + NH4(+) + ATP = CTP + ADP + phosphate + 2 H(+). The protein operates within pyrimidine metabolism; CTP biosynthesis via de novo pathway; CTP from UDP: step 2/2. Allosterically activated by GTP, when glutamine is the substrate; GTP has no effect on the reaction when ammonia is the substrate. The allosteric effector GTP functions by stabilizing the protein conformation that binds the tetrahedral intermediate(s) formed during glutamine hydrolysis. Inhibited by the product CTP, via allosteric rather than competitive inhibition. Catalyzes the ATP-dependent amination of UTP to CTP with either L-glutamine or ammonia as the source of nitrogen. Regulates intracellular CTP levels through interactions with the four ribonucleotide triphosphates. The protein is CTP synthase of Shewanella sp. (strain MR-7).